A 145-amino-acid chain; its full sequence is Ribonuclease H (145 aa).

The RNase H type-1 domain occupies methionine 1 to alanine 142. Positions 10, 48, 70, and 134 each coordinate Mg(2+).

The protein belongs to the RNase H family. As to quaternary structure, monomer. It depends on Mg(2+) as a cofactor.

It is found in the cytoplasm. It catalyses the reaction Endonucleolytic cleavage to 5'-phosphomonoester.. In terms of biological role, endonuclease that specifically degrades the RNA of RNA-DNA hybrids. The sequence is that of Ribonuclease H from Neisseria meningitidis serogroup C / serotype 2a (strain ATCC 700532 / DSM 15464 / FAM18).